A 103-amino-acid polypeptide reads, in one-letter code: Histone H4 (103 aa).

Positions 1–14 are enriched in gly residues; it reads MSGRGKGGKGLGKG. A disordered region spans residues 1–20; the sequence is MSGRGKGGKGLGKGGAKRHR. An N-acetylserine modification is found at serine 2. An N6-acetyl-N6-methyllysine; alternate mark is found at lysine 6 and lysine 13. At lysine 17 the chain carries N6-acetyllysine. Residues 17 to 21 mediate DNA binding; it reads KRHRK. Lysine 21 carries the N6-methyllysine modification.

The protein belongs to the histone H4 family. The nucleosome is a histone octamer containing two molecules each of H2A, H2B, H3 and H4 assembled in one H3-H4 heterotetramer and two H2A-H2B heterodimers. The octamer wraps approximately 147 bp of DNA.

It is found in the nucleus. It localises to the chromosome. Core component of nucleosome. Nucleosomes wrap and compact DNA into chromatin, limiting DNA accessibility to the cellular machineries which require DNA as a template. Histones thereby play a central role in transcription regulation, DNA repair, DNA replication and chromosomal stability. DNA accessibility is regulated via a complex set of post-translational modifications of histones, also called histone code, and nucleosome remodeling. The polypeptide is Histone H4 (H4DEKL) (Dendronephthya klunzingeri (Klunzinger's soft coral)).